Consider the following 39-residue polypeptide: MADFTKFLTTAPVAFILFSSFVFALFIEINRFFPDILTF.

Residues phenylalanine 7–isoleucine 27 form a helical membrane-spanning segment.

The protein belongs to the PsaJ family.

Its subcellular location is the cellular thylakoid membrane. May help in the organization of the PsaE and PsaF subunits. This is Photosystem I reaction center subunit IX from Synechococcus sp. (strain JA-2-3B'a(2-13)) (Cyanobacteria bacterium Yellowstone B-Prime).